Consider the following 110-residue polypeptide: Hydrogenase maturation factor HypA (110 aa).

Ni(2+) is bound at residue His2. Zn(2+)-binding residues include Cys70, Cys73, Cys86, and Cys89.

It belongs to the HypA/HybF family.

Involved in the maturation of [NiFe] hydrogenases. Required for nickel insertion into the metal center of the hydrogenase. In Geotalea uraniireducens (strain Rf4) (Geobacter uraniireducens), this protein is Hydrogenase maturation factor HypA.